The primary structure comprises 321 residues: Probable cell division protein WhiA (321 aa).

Residues 276–309 (NLKELGELLEPPVGKSGVNHRLRKLEKIAEQLHQ) constitute a DNA-binding region (H-T-H motif).

It belongs to the WhiA family.

In terms of biological role, involved in cell division and chromosome segregation. This chain is Probable cell division protein WhiA, found in Natranaerobius thermophilus (strain ATCC BAA-1301 / DSM 18059 / JW/NM-WN-LF).